A 488-amino-acid polypeptide reads, in one-letter code: MGMAENTNGMEEGTLEIGMEYRTVSGVAGPLVILDKVKGPKYQEIVNIRLGDGTTRRGQVLEVDGEKAVVQVFEGTSGIDNKYTTVQFTGEVLKTPVSLDMLGRIFNGSGKPIDNGPPILPEAYLDISGSSINPSERTYPEEMIQTGISTIDVMNSIARGQKIPLFSAAGLPHNEIAAQICRQAGLVKRLEKTGDLLEDGEEDNFAIVFAAMGVNMETAQFFKRDFEENGSMERVTLFLNLANDPTIERIITPRIALTTAEYLAYECGKHVLVILTDMSSYADALREVSAAREEVPGRRGYPGYMYTDLATIYERAGRIEGRKGSITQIPILTMPNDDITHPTPDLTGYITEGQIYIDRQLHNRQIYPPINVLPSLSRLMKSAIGEGMTRRDHADVSNQLYANYAIGKDVQAMKAVVGEEALSSEDLLYLEFLDKFERKVVTQGAYDTRNIFQSLDLAWTLLRIFPRELLHRIPAKTHDQYYSRDAGN.

This sequence belongs to the ATPase alpha/beta chains family. In terms of assembly, V-ATPase is a heteromultimeric enzyme composed of a peripheral catalytic V1 complex (main components: subunits A, B, C, D, E, and F) attached to an integral membrane V0 proton pore complex (main component: the proteolipid protein).

In terms of biological role, non-catalytic subunit of the peripheral V1 complex of vacuolar ATPase. V-ATPase is responsible for acidifying a variety of intracellular compartments in eukaryotic cells. This Gossypium hirsutum (Upland cotton) protein is V-type proton ATPase subunit B 1.